Reading from the N-terminus, the 461-residue chain is Photosystem II CP43 reaction center protein (461 aa).

The propeptide occupies 1–2 (ME). At T3 the chain carries N-acetylthreonine. Position 3 is a phosphothreonine (T3). The next 5 helical transmembrane spans lie at 57-81 (LFEV…PHLA), 122-143 (LIGP…KDKN), 166-188 (KAMY…RIIT), 243-263 (QPWA…LSYS), and 279-300 (WFNN…ASQS). E355 contributes to the [CaMn4O5] cluster binding site. Residues 435–459 (RARAAAAGFEKGIDRLTEPVLSLKP) traverse the membrane as a helical segment.

It belongs to the PsbB/PsbC family. PsbC subfamily. As to quaternary structure, PSII is composed of 1 copy each of membrane proteins PsbA, PsbB, PsbC, PsbD, PsbE, PsbF, PsbH, PsbI, PsbJ, PsbK, PsbL, PsbM, PsbT, PsbX, PsbY, PsbZ, Psb30/Ycf12, at least 3 peripheral proteins of the oxygen-evolving complex and a large number of cofactors. It forms dimeric complexes. It depends on Binds multiple chlorophylls and provides some of the ligands for the Ca-4Mn-5O cluster of the oxygen-evolving complex. It may also provide a ligand for a Cl- that is required for oxygen evolution. PSII binds additional chlorophylls, carotenoids and specific lipids. as a cofactor.

The protein localises to the plastid. The protein resides in the chloroplast thylakoid membrane. In terms of biological role, one of the components of the core complex of photosystem II (PSII). It binds chlorophyll and helps catalyze the primary light-induced photochemical processes of PSII. PSII is a light-driven water:plastoquinone oxidoreductase, using light energy to abstract electrons from H(2)O, generating O(2) and a proton gradient subsequently used for ATP formation. This Stigeoclonium helveticum (Green alga) protein is Photosystem II CP43 reaction center protein.